We begin with the raw amino-acid sequence, 354 residues long: S-adenosylmethionine:tRNA ribosyltransferase-isomerase (354 aa).

The protein belongs to the QueA family. As to quaternary structure, monomer.

It is found in the cytoplasm. The catalysed reaction is 7-aminomethyl-7-carbaguanosine(34) in tRNA + S-adenosyl-L-methionine = epoxyqueuosine(34) in tRNA + adenine + L-methionine + 2 H(+). The protein operates within tRNA modification; tRNA-queuosine biosynthesis. Transfers and isomerizes the ribose moiety from AdoMet to the 7-aminomethyl group of 7-deazaguanine (preQ1-tRNA) to give epoxyqueuosine (oQ-tRNA). The protein is S-adenosylmethionine:tRNA ribosyltransferase-isomerase of Salmonella newport (strain SL254).